Consider the following 217-residue polypeptide: Glycosylphosphatidylinositol anchor biosynthesis protein 11 (217 aa).

The next 2 helical transmembrane spans lie at 45–65 (TWLT…KVFN) and 68–88 (NTAE…IFQF). N-linked (GlcNAc...) asparagine glycosylation occurs at Asn102. 4 consecutive transmembrane segments (helical) span residues 107 to 127 (AISI…IILF), 134 to 154 (LLWE…PAVY), 169 to 189 (YFIL…LDWD), and 197 to 217 (IPIV…GAYL).

The protein belongs to the PIGF family.

It is found in the endoplasmic reticulum membrane. It functions in the pathway glycolipid biosynthesis; glycosylphosphatidylinositol-anchor biosynthesis. In terms of biological role, acts in the GPI biosynthetic pathway between GlcNAc-PI synthesis and GPI transfer to protein. The protein is Glycosylphosphatidylinositol anchor biosynthesis protein 11 (GPI11) of Candida glabrata (strain ATCC 2001 / BCRC 20586 / JCM 3761 / NBRC 0622 / NRRL Y-65 / CBS 138) (Yeast).